Reading from the N-terminus, the 193-residue chain is Thioredoxin peroxidase (193 aa).

The 159-residue stretch at A3 to F161 folds into the Thioredoxin domain. C48 functions as the Cysteine sulfenic acid (-SOH) intermediate in the catalytic mechanism.

This sequence belongs to the peroxiredoxin family. AhpC/Prx1 subfamily. As to quaternary structure, homodimer; disulfide-linked, upon oxidation.

It carries out the reaction a hydroperoxide + [thioredoxin]-dithiol = an alcohol + [thioredoxin]-disulfide + H2O. Thiol-specific peroxidase that catalyzes the reduction of hydrogen peroxide and organic hydroperoxides to water and alcohols, respectively. Plays a role in cell protection against oxidative stress by detoxifying peroxides and as sensor of hydrogen peroxide-mediated signaling events. This is Thioredoxin peroxidase (TPX) from Echinococcus granulosus (Hydatid tapeworm).